A 214-amino-acid polypeptide reads, in one-letter code: Ribosomal RNA small subunit methyltransferase G (214 aa).

S-adenosyl-L-methionine-binding positions include Gly-58, 109–110 (AE), and Arg-126.

It belongs to the methyltransferase superfamily. RNA methyltransferase RsmG family.

Its subcellular location is the cytoplasm. Specifically methylates the N7 position of a guanine in 16S rRNA. The polypeptide is Ribosomal RNA small subunit methyltransferase G (Ureaplasma parvum serovar 3 (strain ATCC 700970)).